A 430-amino-acid chain; its full sequence is UDP-N-acetylglucosamine 1-carboxyvinyltransferase (430 aa).

22–23 (KN) lines the phosphoenolpyruvate pocket. Residue Arg102 coordinates UDP-N-acetyl-alpha-D-glucosamine. Cys126 (proton donor) is an active-site residue. At Cys126 the chain carries 2-(S-cysteinyl)pyruvic acid O-phosphothioketal. Residues 131–135 (RPVDL), 172–175 (KVSV), Asp317, and Ile339 each bind UDP-N-acetyl-alpha-D-glucosamine.

The protein belongs to the EPSP synthase family. MurA subfamily.

The protein localises to the cytoplasm. The catalysed reaction is phosphoenolpyruvate + UDP-N-acetyl-alpha-D-glucosamine = UDP-N-acetyl-3-O-(1-carboxyvinyl)-alpha-D-glucosamine + phosphate. It participates in cell wall biogenesis; peptidoglycan biosynthesis. Cell wall formation. Adds enolpyruvyl to UDP-N-acetylglucosamine. This is UDP-N-acetylglucosamine 1-carboxyvinyltransferase from Rhizobium leguminosarum bv. trifolii (strain WSM2304).